The chain runs to 269 residues: AQSVPWGISRVQAPAAHNRGLTGSGVKVAVLDTGISTHPDLNIRGGASFVPGEPSTQDGNGHGTHVAGTIAALNNSIGVLGVAPSAELYAVKVLGADGRGAISSIAQGLEWAGNNGMHVANLSLGSPSPSATLEQAVNSATSRGVLVVAASGNSGASSISYPARYANAMAVGATDQNNNRASFSQYGAGLDIVAPGVNVQSTYPGSTYASLNGTSMATPHVAGAAALVKQKNPSWSNVQIRNHLKNTATSLGSTNLYGSGLVNAEAATR.

A Ca(2+)-binding site is contributed by glutamine 2. Residues 5–268 (PWGISRVQAP…SGLVNAEAAT (264 aa)) enclose the Peptidase S8 domain. Residue aspartate 32 is the Charge relay system of the active site. Aspartate 40 contributes to the Ca(2+) binding site. Histidine 62 acts as the Charge relay system in catalysis. Residues leucine 73, asparagine 75, isoleucine 77, valine 79, alanine 163, tyrosine 165, and alanine 168 each contribute to the Ca(2+) site. Catalysis depends on serine 215, which acts as the Charge relay system.

It belongs to the peptidase S8 family. It depends on Ca(2+) as a cofactor.

The protein localises to the secreted. The enzyme catalyses Hydrolysis of proteins with broad specificity for peptide bonds, and a preference for a large uncharged residue in P1. Hydrolyzes peptide amides.. In terms of biological role, subtilisin is an extracellular alkaline serine protease, it catalyzes the hydrolysis of proteins and peptide amides. The protein is Subtilisin BL of Lederbergia lenta (Bacillus lentus).